The chain runs to 111 residues: Small ribosomal subunit protein bS18 (111 aa).

A disordered region spans residues 1-32; the sequence is MDLENTENVENNNNNEEEVKAKGERKAHFNKE. Positions 17-32 are enriched in basic and acidic residues; that stretch reads EEVKAKGERKAHFNKE.

This sequence belongs to the bacterial ribosomal protein bS18 family. As to quaternary structure, part of the 30S ribosomal subunit. Forms a tight heterodimer with protein bS6.

Binds as a heterodimer with protein bS6 to the central domain of the 16S rRNA, where it helps stabilize the platform of the 30S subunit. The protein is Small ribosomal subunit protein bS18 of Brachyspira hyodysenteriae (strain ATCC 49526 / WA1).